Here is a 481-residue protein sequence, read N- to C-terminus: uncharacterized protein (481 aa).

The segment at 1–28 (MPQSNHYSHQSRSHNDRRRQQPDEKVQA) is disordered. A TRAM domain is found at 29–87 (TVNIGQRFPLTIRRLGINGEGIGYYKHVITFVKGALPEEVVVAEVTAVHPRYLEAKIRS). S-adenosyl-L-methionine-binding residues include Gln-313, Tyr-342, Asp-363, and Asp-411. Residue Cys-438 is the Nucleophile of the active site.

This sequence belongs to the class I-like SAM-binding methyltransferase superfamily. RNA M5U methyltransferase family.

This is an uncharacterized protein from Lactiplantibacillus plantarum (strain ATCC BAA-793 / NCIMB 8826 / WCFS1) (Lactobacillus plantarum).